Reading from the N-terminus, the 472-residue chain is Levansucrase (472 aa).

The N-terminal stretch at 1–29 is a signal peptide; sequence MNIKKIVKQATVLTFTTALLAGGATQAFA. Sucrose is bound by residues W85, D86, and S164. The Nucleophile role is filled by D86. Residue D241 participates in Ca(2+) binding. Sucrose-binding residues include R246 and D247. Ca(2+) is bound by residues Q272, L308, N310, and D339. E340 contacts sucrose. The active-site Proton donor/acceptor is the E342. Sucrose is bound at residue R360.

Belongs to the glycosyl hydrolase 68 family.

The protein localises to the secreted. The catalysed reaction is [6)-beta-D-fructofuranosyl-(2-&gt;](n) alpha-D-glucopyranoside + sucrose = [6)-beta-D-fructofuranosyl-(2-&gt;](n+1) alpha-D-glucopyranoside + D-glucose. Its activity is regulated as follows. Ca(2+) may play an important structural role and promote stability of levansucrase. In terms of biological role, catalyzes the synthesis of levan, a fructose polymer, by transferring the fructosyl moiety from sucrose to a growing acceptor molecule. Also displays sucrose hydrolase activity. The chain is Levansucrase from Bacillus amyloliquefaciens (Bacillus velezensis).